Consider the following 173-residue polypeptide: Protein tyrosine phosphatase type IVA 3 (173 aa).

In terms of domain architecture, Tyrosine-protein phosphatase spans 8–161 (APVEVSYRHM…YRPKQRLRFK (154 aa)). Cysteine 49 and cysteine 104 form a disulfide bridge. The Proton donor role is filled by aspartate 72. Cysteine 104 (phosphocysteine intermediate) is an active-site residue. Arginine 110 provides a ligand contact to substrate. Cysteine 170 bears the Cysteine methyl ester mark. Cysteine 170 is lipidated: S-farnesyl cysteine. Residues 171 to 173 (CVM) constitute a propeptide, removed in mature form.

Belongs to the protein-tyrosine phosphatase family. In terms of assembly, interacts with tubulin. Post-translationally, farnesylated. Farnesylation is required for membrane targeting. Unfarnesylated forms are shifted into the nucleus. In terms of tissue distribution, present in the small intestine, where it is located in the differentiated epithelial cells of the villus but not in the proliferating crypt cells (at protein level). Expressed in heart and skeletal muscle, and at lower levels in lung, spleen and testis.

It localises to the cell membrane. Its subcellular location is the early endosome. The catalysed reaction is O-phospho-L-tyrosyl-[protein] + H2O = L-tyrosyl-[protein] + phosphate. With respect to regulation, inhibited by sodium orthovanadate and peroxovanadium compounds, and by pentamidine. Functionally, protein tyrosine phosphatase which stimulates progression from G1 into S phase during mitosis. Enhances cell proliferation, cell motility and invasive activity, and promotes cancer metastasis. May be involved in the progression of cardiac hypertrophy by inhibiting intracellular calcium mobilization in response to angiotensin II. The chain is Protein tyrosine phosphatase type IVA 3 (Ptp4a3) from Mus musculus (Mouse).